We begin with the raw amino-acid sequence, 200 residues long: NADH-quinone oxidoreductase subunit C (200 aa).

The protein belongs to the complex I 30 kDa subunit family. In terms of assembly, NDH-1 is composed of 14 different subunits. Subunits NuoB, C, D, E, F, and G constitute the peripheral sector of the complex.

Its subcellular location is the cell inner membrane. The enzyme catalyses a quinone + NADH + 5 H(+)(in) = a quinol + NAD(+) + 4 H(+)(out). Functionally, NDH-1 shuttles electrons from NADH, via FMN and iron-sulfur (Fe-S) centers, to quinones in the respiratory chain. The immediate electron acceptor for the enzyme in this species is believed to be ubiquinone. Couples the redox reaction to proton translocation (for every two electrons transferred, four hydrogen ions are translocated across the cytoplasmic membrane), and thus conserves the redox energy in a proton gradient. This Paraburkholderia phytofirmans (strain DSM 17436 / LMG 22146 / PsJN) (Burkholderia phytofirmans) protein is NADH-quinone oxidoreductase subunit C.